Here is a 376-residue protein sequence, read N- to C-terminus: Cinnamyl alcohol dehydrogenase 2 (376 aa).

Cysteine 44 contacts Zn(2+). Serine 46 lines the NADP(+) pocket. The Zn(2+) site is built by histidine 66, glutamate 67, cysteine 97, cysteine 100, cysteine 103, cysteine 111, and cysteine 161. Residues threonine 165, glycine 187–glycine 192, serine 210–lysine 215, threonine 250, glycine 274, and serine 297–isoleucine 299 contribute to the NADP(+) site.

It belongs to the zinc-containing alcohol dehydrogenase family. In terms of assembly, homodimer. Zn(2+) serves as cofactor. As to expression, expressed at the base of the stems.

The catalysed reaction is (E)-cinnamyl alcohol + NADP(+) = (E)-cinnamaldehyde + NADPH + H(+). It catalyses the reaction (E)-coniferol + NADP(+) = (E)-coniferaldehyde + NADPH + H(+). It carries out the reaction (E)-sinapyl alcohol + NADP(+) = (E)-sinapaldehyde + NADPH + H(+). The enzyme catalyses (E)-4-coumaroyl alcohol + NADP(+) = (E)-4-coumaraldehyde + NADPH + H(+). The catalysed reaction is (E)-caffeyl alcohol + NADP(+) = (E)-caffeyl aldehyde + NADPH + H(+). Its pathway is aromatic compound metabolism; phenylpropanoid biosynthesis. In terms of biological role, involved in lignin biosynthesis. Catalyzes the final step specific for the production of lignin monomers. Catalyzes the NADPH-dependent reduction of coniferaldehyde, 5-hydroxyconiferaldehyde, sinapaldehyde, 4-coumaraldehyde and caffeyl aldehyde to their respective alcohols. The protein is Cinnamyl alcohol dehydrogenase 2 of Arabidopsis thaliana (Mouse-ear cress).